The primary structure comprises 173 residues: Bifunctional protein PyrR (173 aa).

The PRPP-binding signature appears at 93–105 (VILVDDVLYTGRT).

Belongs to the purine/pyrimidine phosphoribosyltransferase family. PyrR subfamily. As to quaternary structure, homodimer and homohexamer; in equilibrium.

The enzyme catalyses UMP + diphosphate = 5-phospho-alpha-D-ribose 1-diphosphate + uracil. Regulates transcriptional attenuation of the pyrimidine nucleotide (pyr) operon by binding in a uridine-dependent manner to specific sites on pyr mRNA. This disrupts an antiterminator hairpin in the RNA and favors formation of a downstream transcription terminator, leading to a reduced expression of downstream genes. In terms of biological role, also displays a weak uracil phosphoribosyltransferase activity which is not physiologically significant. The protein is Bifunctional protein PyrR of Streptococcus thermophilus (strain ATCC BAA-491 / LMD-9).